The primary structure comprises 115 residues: UPF0738 protein SACOL1009 (115 aa).

It belongs to the UPF0738 family.

In Staphylococcus aureus (strain COL), this protein is UPF0738 protein SACOL1009.